We begin with the raw amino-acid sequence, 158 residues long: Putative 4-hydroxy-4-methyl-2-oxoglutarate aldolase (158 aa).

Substrate-binding positions include 75-78 (GDLI) and Arg97. A divalent metal cation is bound at residue Asp98.

It belongs to the class II aldolase/RraA-like family. As to quaternary structure, homotrimer. It depends on a divalent metal cation as a cofactor.

It catalyses the reaction 4-hydroxy-4-methyl-2-oxoglutarate = 2 pyruvate. The catalysed reaction is oxaloacetate + H(+) = pyruvate + CO2. Functionally, catalyzes the aldol cleavage of 4-hydroxy-4-methyl-2-oxoglutarate (HMG) into 2 molecules of pyruvate. Also contains a secondary oxaloacetate (OAA) decarboxylase activity due to the common pyruvate enolate transition state formed following C-C bond cleavage in the retro-aldol and decarboxylation reactions. This Saccharopolyspora erythraea (strain ATCC 11635 / DSM 40517 / JCM 4748 / NBRC 13426 / NCIMB 8594 / NRRL 2338) protein is Putative 4-hydroxy-4-methyl-2-oxoglutarate aldolase.